The primary structure comprises 30 residues: Toxic protein AapA1 (30 aa).

The protein belongs to the AapA toxin family.

It is found in the cell inner membrane. Transcription of the aapA1 gene generates a full-length transcript whose folding impedes translation. Processing of the 3' end of the aapA1 message generates a shorter transcript that becomes translatable after a structural rearrangement. The processing also makes it more susceptible to forming dsRNA with IsoA1 which leads to duplex RNA degradation by RNase 3 (rnc). Its function is as follows. May be involved in response to oxidative stress. Toxic component of a type I toxin-antitoxin (TA) system. When overexpression is induced in situ in the absence of its cognate antisense RNA antitoxin IsoA1 it leads to cell growth arrest and cell death without lysis. Neutralized by IsoA1 RNA which forms an extensive duplex with the mRNA. Binds artificial prokaryotic and eukaryotic lipid membranes, with 30-fold higher affinity for prokaryotic membranes. Molecular dynamics suggests the peptide penetrates the membrane leading to lipid reorganization and thinning of the bilayer. Induction of toxin in the absence of antitoxin RNA causes a fast conversion of cells from spiral-shaped to coccoid forms; cells have no visible membrane defects and resemble wild-type 'aging coccoids'. Toxin causes a moderate decrease in membrane potential and ATP content and alterations in peptidoglycan muropeptide abundance; GlcNAc-MurNAc dipeptides increase while GlcNAc-MurNAc tripeptides decrease (i.e. a faster phenocopy of cell aging). Deletion of all 6 AapA/IsoA TA loci in strain B128 leads to slower than wild-type conversion of H2O2-treated cells to the coccoid form. This suggests oxidative stress triggers coccoid transformation via these type I TA systems, although other factors eventually drive the morphology change. In Helicobacter pylori (strain ATCC 700392 / 26695) (Campylobacter pylori), this protein is Toxic protein AapA1.